Consider the following 153-residue polypeptide: Ribosome maturation factor RimP (153 aa).

The protein belongs to the RimP family.

The protein localises to the cytoplasm. Required for maturation of 30S ribosomal subunits. The chain is Ribosome maturation factor RimP from Trichormus variabilis (strain ATCC 29413 / PCC 7937) (Anabaena variabilis).